The chain runs to 597 residues: Probable translation initiation factor IF-2 (597 aa).

The 218-residue stretch at 8-225 (LRQPIVVVLG…LLAGLTQQYL (218 aa)) folds into the tr-type G domain. The interval 17–24 (GHVDHGKT) is G1. 17 to 24 (GHVDHGKT) is a GTP binding site. The tract at residues 42 to 46 (EMTQE) is G2. Residues 81 to 84 (DTPG) form a G3 region. GTP contacts are provided by residues 81 to 85 (DTPGH) and 135 to 138 (NKID). The tract at residues 135–138 (NKID) is G4. The segment at 203-205 (SGK) is G5.

This sequence belongs to the TRAFAC class translation factor GTPase superfamily. Classic translation factor GTPase family. IF-2 subfamily.

Function in general translation initiation by promoting the binding of the formylmethionine-tRNA to ribosomes. Seems to function along with eIF-2. This chain is Probable translation initiation factor IF-2, found in Metallosphaera sedula (strain ATCC 51363 / DSM 5348 / JCM 9185 / NBRC 15509 / TH2).